A 203-amino-acid chain; its full sequence is Ribonuclease T (203 aa).

One can recognise an Exonuclease domain in the interval 11 to 185; sequence VVVDVETGGF…YDTEKTAELF (175 aa). Residues Asp-14, Glu-16, His-172, and Asp-177 each coordinate Mg(2+). His-172 acts as the Proton donor/acceptor in catalysis.

This sequence belongs to the RNase T family. Homodimer. The cofactor is Mg(2+).

Trims short 3' overhangs of a variety of RNA species, leaving a one or two nucleotide 3' overhang. Responsible for the end-turnover of tRNA: specifically removes the terminal AMP residue from uncharged tRNA (tRNA-C-C-A). Also appears to be involved in tRNA biosynthesis. The protein is Ribonuclease T of Pseudomonas putida (strain ATCC 47054 / DSM 6125 / CFBP 8728 / NCIMB 11950 / KT2440).